Reading from the N-terminus, the 369-residue chain is Queuine tRNA-ribosyltransferase (369 aa).

Asp89 serves as the catalytic Proton acceptor. Substrate contacts are provided by residues 89–93, Asp142, Gln184, and Gly211; that span reads DSGGF. The segment at 242–248 is RNA binding; the sequence is GGGSPEL. The active-site Nucleophile is the Asp261. The segment at 266–270 is RNA binding; important for wobble base 34 recognition; the sequence is TRIAR. Residues Cys299, Cys301, Cys304, and His330 each contribute to the Zn(2+) site.

It belongs to the queuine tRNA-ribosyltransferase family. As to quaternary structure, homodimer. Within each dimer, one monomer is responsible for RNA recognition and catalysis, while the other monomer binds to the replacement base PreQ1. The cofactor is Zn(2+).

It catalyses the reaction 7-aminomethyl-7-carbaguanine + guanosine(34) in tRNA = 7-aminomethyl-7-carbaguanosine(34) in tRNA + guanine. Its pathway is tRNA modification; tRNA-queuosine biosynthesis. Catalyzes the base-exchange of a guanine (G) residue with the queuine precursor 7-aminomethyl-7-deazaguanine (PreQ1) at position 34 (anticodon wobble position) in tRNAs with GU(N) anticodons (tRNA-Asp, -Asn, -His and -Tyr). Catalysis occurs through a double-displacement mechanism. The nucleophile active site attacks the C1' of nucleotide 34 to detach the guanine base from the RNA, forming a covalent enzyme-RNA intermediate. The proton acceptor active site deprotonates the incoming PreQ1, allowing a nucleophilic attack on the C1' of the ribose to form the product. After dissociation, two additional enzymatic reactions on the tRNA convert PreQ1 to queuine (Q), resulting in the hypermodified nucleoside queuosine (7-(((4,5-cis-dihydroxy-2-cyclopenten-1-yl)amino)methyl)-7-deazaguanosine). The chain is Queuine tRNA-ribosyltransferase from Thermotoga neapolitana (strain ATCC 49049 / DSM 4359 / NBRC 107923 / NS-E).